The following is a 68-amino-acid chain: UPF0337 protein RB10934 (68 aa).

Belongs to the UPF0337 (CsbD) family.

In Rhodopirellula baltica (strain DSM 10527 / NCIMB 13988 / SH1), this protein is UPF0337 protein RB10934.